The sequence spans 215 residues: Coat protein (215 aa).

The disordered stretch occupies residues 1-34; it reads MATQNADVTDATDYKKPPAETEQKALTIQPRSNK. Residues 12–23 are compositionally biased toward basic and acidic residues; it reads TDYKKPPAETEQ. Over residues 24-34 the composition is skewed to polar residues; it reads KALTIQPRSNK.

This sequence belongs to the potexvirus capsid protein family.

The protein localises to the virion. In terms of biological role, required for genome encapsidation. Forms ribonucleoprotein complexes along with TGB1 helicase and viral RNA. The sequence is that of Coat protein from Setaria italica (Foxtail millet).